The primary structure comprises 217 residues: UPF0173 metal-dependent hydrolase MJ1163 (217 aa).

Belongs to the UPF0173 family.

This Methanocaldococcus jannaschii (strain ATCC 43067 / DSM 2661 / JAL-1 / JCM 10045 / NBRC 100440) (Methanococcus jannaschii) protein is UPF0173 metal-dependent hydrolase MJ1163.